The chain runs to 1709 residues: Acrosomal protein KIAA1210 (1709 aa).

Disordered regions lie at residues 207-226 (PVRE…GSKA), 239-275 (PERS…SKVP), 451-663 (PNLD…AEKT), 763-973 (PPRS…MAVE), 1211-1382 (LKRG…SVNA), 1408-1516 (TKKF…GRGH), 1539-1571 (ADKQ…QSDY), and 1589-1653 (FKAH…KSVG). A compositionally biased stretch (basic residues) spans 257 to 272 (PQQRSHISRTLPKPRS). Residues 473 to 490 (EEEKSITKPKEINEKKLG) show a composition bias toward basic and acidic residues. 2 stretches are compositionally biased toward polar residues: residues 494-505 (ADSSSQKQNNKT) and 514-527 (DQAP…SQGY). The segment covering 595 to 608 (EQPTTSQPETTTPQ) has biased composition (low complexity). Over residues 651 to 663 (PYHEDAASGAEKT) the composition is skewed to basic and acidic residues. Residues 777–794 (EEVSSDSENIPEEGDGSE) are compositionally biased toward acidic residues. Composition is skewed to polar residues over residues 886–941 (KNQQ…QSDS), 1288–1299 (FKEQLSPRQLSQ), 1332–1350 (HSSQ…SSKG), 1366–1376 (PSSSPFQQQVH), and 1457–1469 (DGNN…LSNQ). The segment covering 1502 to 1513 (SVPSGPISSSVG) has biased composition (low complexity). Basic and acidic residues predominate over residues 1542–1552 (QQSRPKSESMA).

As to quaternary structure, interacts with TOP2B.

The protein resides in the cytoplasmic vesicle. It localises to the secretory vesicle. The protein localises to the acrosome. This Homo sapiens (Human) protein is Acrosomal protein KIAA1210.